The chain runs to 88 residues: Small ribosomal subunit protein bS20 (88 aa).

The tract at residues 1-28 (MANTVQARKRARQAVKQNEHNSSLRSKL) is disordered.

Belongs to the bacterial ribosomal protein bS20 family.

Functionally, binds directly to 16S ribosomal RNA. This is Small ribosomal subunit protein bS20 from Polynucleobacter necessarius subsp. necessarius (strain STIR1).